Reading from the N-terminus, the 171-residue chain is CDP-archaeol synthase (171 aa).

The next 5 membrane-spanning stretches (helical) occupy residues 7–27 (MFWA…PVLL), 55–75 (FLGG…LTPA), 84–104 (VLLA…GSFI), 115–135 (PAVG…AYPV), and 141–161 (GQML…NYFA).

This sequence belongs to the CDP-archaeol synthase family. Requires Mg(2+) as cofactor.

Its subcellular location is the cell membrane. The enzyme catalyses 2,3-bis-O-(geranylgeranyl)-sn-glycerol 1-phosphate + CTP + H(+) = CDP-2,3-bis-O-(geranylgeranyl)-sn-glycerol + diphosphate. It participates in membrane lipid metabolism; glycerophospholipid metabolism. In terms of biological role, catalyzes the formation of CDP-2,3-bis-(O-geranylgeranyl)-sn-glycerol (CDP-archaeol) from 2,3-bis-(O-geranylgeranyl)-sn-glycerol 1-phosphate (DGGGP) and CTP. This reaction is the third ether-bond-formation step in the biosynthesis of archaeal membrane lipids. The protein is CDP-archaeol synthase of Thermococcus gammatolerans (strain DSM 15229 / JCM 11827 / EJ3).